Here is a 553-residue protein sequence, read N- to C-terminus: Imidazole glycerol phosphate synthase hisHF (553 aa).

The Glutamine amidotransferase type-1 domain occupies threonine 3–serine 223. Residues cysteine 81, histidine 194, and glutamate 196 each act as for GATase activity in the active site. The interval leucine 232 to valine 553 is cyclase. Catalysis depends on residues aspartate 241 and aspartate 403.

This sequence in the C-terminal section; belongs to the HisA/HisF family.

It carries out the reaction 5-[(5-phospho-1-deoxy-D-ribulos-1-ylimino)methylamino]-1-(5-phospho-beta-D-ribosyl)imidazole-4-carboxamide + L-glutamine = D-erythro-1-(imidazol-4-yl)glycerol 3-phosphate + 5-amino-1-(5-phospho-beta-D-ribosyl)imidazole-4-carboxamide + L-glutamate + H(+). The catalysed reaction is L-glutamine + H2O = L-glutamate + NH4(+). It participates in amino-acid biosynthesis; L-histidine biosynthesis; L-histidine from 5-phospho-alpha-D-ribose 1-diphosphate: step 5/9. Functionally, IGPS catalyzes the conversion of PRFAR and glutamine to IGP, AICAR and glutamate. The glutaminase domain produces the ammonia necessary for the cyclase domain to produce IGP and AICAR from PRFAR. The ammonia is channeled to the active site of the cyclase domain. The protein is Imidazole glycerol phosphate synthase hisHF (hisHF) of Emericella nidulans (strain FGSC A4 / ATCC 38163 / CBS 112.46 / NRRL 194 / M139) (Aspergillus nidulans).